We begin with the raw amino-acid sequence, 185 residues long: Peptidyl-tRNA hydrolase (185 aa).

Y14 is a tRNA binding site. H19 functions as the Proton acceptor in the catalytic mechanism. Residues Y65, N67, and N113 each coordinate tRNA.

This sequence belongs to the PTH family. As to quaternary structure, monomer.

It localises to the cytoplasm. It carries out the reaction an N-acyl-L-alpha-aminoacyl-tRNA + H2O = an N-acyl-L-amino acid + a tRNA + H(+). Hydrolyzes ribosome-free peptidyl-tRNAs (with 1 or more amino acids incorporated), which drop off the ribosome during protein synthesis, or as a result of ribosome stalling. Its function is as follows. Catalyzes the release of premature peptidyl moieties from peptidyl-tRNA molecules trapped in stalled 50S ribosomal subunits, and thus maintains levels of free tRNAs and 50S ribosomes. This is Peptidyl-tRNA hydrolase from Rickettsia bellii (strain OSU 85-389).